The primary structure comprises 471 residues: Heparan-sulfate 6-O-sulfotransferase 3 (471 aa).

Residues 1–4 (MDER) are Cytoplasmic-facing. The chain crosses the membrane as a helical; Signal-anchor for type II membrane protein span at residues 5 to 27 (FNKWLLTPVLTLLFVVIMYQYVS). At 28-471 (PSCTSSCTNF…EDYNSQVVRW (444 aa)) the chain is on the lumenal side. A disordered region spans residues 39 to 122 (EQPRAGEAGP…EAPENGSLPR (84 aa)). The span at 41 to 62 (PRAGEAGPPAVPGPARRAQAPP) shows a compositional bias: low complexity. Over residues 70-81 (QLPPPPRGPPEG) the composition is skewed to pro residues. A compositionally biased stretch (acidic residues) spans 88–114 (PEEEDEEPGDPREGEEEEEEDEPDPEA). N-linked (GlcNAc...) asparagine glycosylation is found at Asn117 and Asn128. 152 to 160 (HIQKTGGTT) contributes to the 3'-phosphoadenylyl sulfate binding site. Residues 182-183 (KK), Arg199, Trp204, and His209 each bind substrate. The Proton acceptor role is filled by His209. N-linked (GlcNAc...) asparagine glycosylation is present at Asn231. 2 residues coordinate 3'-phosphoadenylyl sulfate: Arg245 and Ser253. Residues His257 and Trp264 each contribute to the substrate site. Asn324 and Asn329 each carry an N-linked (GlcNAc...) asparagine glycan. 377–379 (TQF) lines the 3'-phosphoadenylyl sulfate pocket. Residue Asn380 is glycosylated (N-linked (GlcNAc...) asparagine). 383–384 (RA) is a 3'-phosphoadenylyl sulfate binding site. The disordered stretch occupies residues 422 to 471 (TKQLEHQRDRQKRREERRLQREHRDHQWPKEDGAAEGTVTEDYNSQVVRW). Residues 423-454 (KQLEHQRDRQKRREERRLQREHRDHQWPKEDG) show a composition bias toward basic and acidic residues. The segment covering 462-471 (EDYNSQVVRW) has biased composition (polar residues).

The protein belongs to the sulfotransferase 6 family.

The protein localises to the membrane. The enzyme catalyses alpha-D-glucosaminyl-[heparan sulfate](n) + 3'-phosphoadenylyl sulfate = 6-sulfo-alpha-D-glucosaminyl-[heparan sulfate](n) + adenosine 3',5'-bisphosphate + H(+). In terms of biological role, 6-O-sulfation enzyme which catalyzes the transfer of sulfate from 3'-phosphoadenosine 5'-phosphosulfate (PAPS) to position 6 of the N-sulfoglucosamine residue (GlcNS) of heparan sulfate. The chain is Heparan-sulfate 6-O-sulfotransferase 3 (HS6ST3) from Homo sapiens (Human).